The sequence spans 142 residues: Large ribosomal subunit protein uL13 (142 aa).

This sequence belongs to the universal ribosomal protein uL13 family. In terms of assembly, part of the 50S ribosomal subunit.

Functionally, this protein is one of the early assembly proteins of the 50S ribosomal subunit, although it is not seen to bind rRNA by itself. It is important during the early stages of 50S assembly. In Pasteurella multocida (strain Pm70), this protein is Large ribosomal subunit protein uL13.